The following is a 75-amino-acid chain: MIYKVLYQKDQIVNPRRETTKTLFLEADNVVAARTMVEDNTPYNIELIQELTGNSLAYEKQSPDFKLTTFDSKDN.

It belongs to the RNA polymerase subunit epsilon family. In terms of assembly, RNAP is composed of a core of 2 alpha, a beta and a beta' subunit. The core is associated with a delta subunit, and at least one of epsilon or omega. When a sigma factor is associated with the core the holoenzyme is formed, which can initiate transcription.

It carries out the reaction RNA(n) + a ribonucleoside 5'-triphosphate = RNA(n+1) + diphosphate. In terms of biological role, a non-essential component of RNA polymerase (RNAP). The polypeptide is DNA-directed RNA polymerase subunit epsilon (Lactobacillus johnsonii (strain CNCM I-12250 / La1 / NCC 533)).